The primary structure comprises 664 residues: Glycine--tRNA ligase beta subunit (664 aa).

This sequence belongs to the class-II aminoacyl-tRNA synthetase family. Tetramer of two alpha and two beta subunits.

It is found in the cytoplasm. It carries out the reaction tRNA(Gly) + glycine + ATP = glycyl-tRNA(Gly) + AMP + diphosphate. This is Glycine--tRNA ligase beta subunit from Rickettsia typhi (strain ATCC VR-144 / Wilmington).